A 76-amino-acid chain; its full sequence is Defensin-like protein 5 (76 aa).

Residues methionine 1–alanine 29 form the signal peptide. Intrachain disulfides connect cysteine 32-cysteine 76, cysteine 43-cysteine 63, cysteine 49-cysteine 70, and cysteine 53-cysteine 72.

The protein belongs to the DEFL family.

The protein localises to the secreted. In terms of biological role, confers broad-spectrum resistance to pathogens. The sequence is that of Defensin-like protein 5 (PDF2.4) from Arabidopsis thaliana (Mouse-ear cress).